Here is a 294-residue protein sequence, read N- to C-terminus: Cyclin-G1 (294 aa).

This sequence belongs to the cyclin family. Cyclin G subfamily. In terms of assembly, binds to B' regulatory B subunits of protein phosphatase A (PP2A) following induction by p53 (in vitro). As to expression, highest levels in kidney, heart and skeletal muscle.

The protein resides in the nucleus. Functionally, may play a role in growth regulation. Is associated with G2/M phase arrest in response to DNA damage. May be an intermediate by which p53 mediates its role as an inhibitor of cellular proliferation. In Mus musculus (Mouse), this protein is Cyclin-G1 (Ccng1).